A 681-amino-acid chain; its full sequence is Heat shock 70 kDa protein (681 aa).

The segment covering 655 to 665 has biased composition (gly residues); sequence NFPGGMPGAGM. The tract at residues 655 to 681 is disordered; the sequence is NFPGGMPGAGMPGNAPAGSGPTVEEVD. Low complexity predominate over residues 666 to 675; it reads PGNAPAGSGP.

The protein belongs to the heat shock protein 70 family.

The sequence is that of Heat shock 70 kDa protein from Plasmodium falciparum.